Consider the following 330-residue polypeptide: 4-hydroxythreonine-4-phosphate dehydrogenase (330 aa).

T133 contributes to the substrate binding site. The a divalent metal cation site is built by H161, H206, and H261. Substrate-binding residues include K269, N278, and R287.

The protein belongs to the PdxA family. Homodimer. It depends on Zn(2+) as a cofactor. Requires Mg(2+) as cofactor. Co(2+) serves as cofactor.

It is found in the cytoplasm. It catalyses the reaction 4-(phosphooxy)-L-threonine + NAD(+) = 3-amino-2-oxopropyl phosphate + CO2 + NADH. It participates in cofactor biosynthesis; pyridoxine 5'-phosphate biosynthesis; pyridoxine 5'-phosphate from D-erythrose 4-phosphate: step 4/5. In terms of biological role, catalyzes the NAD(P)-dependent oxidation of 4-(phosphooxy)-L-threonine (HTP) into 2-amino-3-oxo-4-(phosphooxy)butyric acid which spontaneously decarboxylates to form 3-amino-2-oxopropyl phosphate (AHAP). This chain is 4-hydroxythreonine-4-phosphate dehydrogenase, found in Xylella fastidiosa (strain 9a5c).